Reading from the N-terminus, the 59-residue chain is Large ribosomal subunit protein uL30 (59 aa).

The protein belongs to the universal ribosomal protein uL30 family. Part of the 50S ribosomal subunit.

The polypeptide is Large ribosomal subunit protein uL30 (Photorhabdus laumondii subsp. laumondii (strain DSM 15139 / CIP 105565 / TT01) (Photorhabdus luminescens subsp. laumondii)).